Reading from the N-terminus, the 374-residue chain is Fatty acid conjugase FAC2 A (374 aa).

The next 2 membrane-spanning stretches (helical) occupy residues Ile50 to Phe70 and Ile74 to Gly94. The Histidine box-1 signature appears at His95–His99. The Histidine box-2 motif lies at His131 to His135. Transmembrane regions (helical) follow at residues Met168–Phe188, Val219–Val239, and Phe246–Leu266. The Histidine box-3 motif lies at His306–His310.

The protein belongs to the fatty acid desaturase type 1 family. In terms of tissue distribution, expressed exclusively in the developing seeds. Not detected in leaves or flower buds.

It is found in the microsome membrane. It catalyses the reaction a (9Z,12Z)-octadecadienoyl-containing glycerolipid + AH2 + O2 = a (8E,10E,12Z)-octadecatrienoyl-containing glycerolipid + A + 2 H2O. Its pathway is lipid metabolism; polyunsaturated fatty acid biosynthesis. Its function is as follows. Fatty acid conjugase converting 18:2(9Z, 12Z) to calendic acid 18:3(8E, 10E, 12Z). Converts alpha-linolenic acid (18:3(9Z, 12Z, 15Z)) into 18:4(8E, 10E, 12Z, 15Z). Also has weak activity on the mono-unsaturates 16:1(9Z) and 18:1(9Z) producing two conjugated double bonds at delta(8) and delta(10) position. The polypeptide is Fatty acid conjugase FAC2 A (Calendula officinalis (Pot marigold)).